The primary structure comprises 33 residues: GFFAFIPKIISSPLFKTLLSAVGSALSSSGEQE.

The protein belongs to the pardaxin family. As to quaternary structure, in aqueous solution exists as a tetramer.

It localises to the secreted. Its subcellular location is the target cell membrane. Exhibits unusual shark repellent and surfactant properties. Forms voltage-dependent, ion-permeable channels in membranes. At high concentration causes cell membrane lysis. In Pardachirus pavoninus (Peacock sole), this protein is Pardaxin P-3.